A 729-amino-acid polypeptide reads, in one-letter code: uncharacterized protein (729 aa).

This is an uncharacterized protein from Caenorhabditis elegans.